The primary structure comprises 248 residues: Aspartate/glutamate leucyltransferase (248 aa).

The protein belongs to the R-transferase family. Bpt subfamily.

It localises to the cytoplasm. The enzyme catalyses N-terminal L-glutamyl-[protein] + L-leucyl-tRNA(Leu) = N-terminal L-leucyl-L-glutamyl-[protein] + tRNA(Leu) + H(+). It catalyses the reaction N-terminal L-aspartyl-[protein] + L-leucyl-tRNA(Leu) = N-terminal L-leucyl-L-aspartyl-[protein] + tRNA(Leu) + H(+). Functions in the N-end rule pathway of protein degradation where it conjugates Leu from its aminoacyl-tRNA to the N-termini of proteins containing an N-terminal aspartate or glutamate. This is Aspartate/glutamate leucyltransferase from Methylobacillus flagellatus (strain ATCC 51484 / DSM 6875 / VKM B-1610 / KT).